Reading from the N-terminus, the 396-residue chain is MTVSIYLAKGRDKALRRRHPWIFSRGIDRIDGKAELGETVEIYANNGEWLARGAFSPQSQIRARVWTFDKNEAIDKDFFVRKLNQAQALRNVLAERDGLTGYRLIAAESDGLPGITIDRYQDYFVCQLLSAGAEATKELLVEALVECYPDCNIYERSDVSVRKKEGLKQRTGVLHGEEPPESVVIEENGVKISVDIVNGHKTGFYLDQRDSRERACKYVKNKSVLNCFSYTGGFGLYALKGGAKHVINADVSQLALDTAKYNAEINKFDLSKAEFLNADVFKLLREYRDNGTKFDVVIMDPPKFAESKNQLTGACRGYKDINMLAMQILNPGGTLLTYSCSGLMDAGLFQKIVADAALDAHRTVQFIERFEQAADHPLDSAYPEGFYLKGFACRVV.

Residues 2-81 (TVSIYLAKGR…EAIDKDFFVR (80 aa)) enclose the PUA domain.

This sequence belongs to the methyltransferase superfamily. RlmI family.

The protein localises to the cytoplasm. It carries out the reaction cytidine(1962) in 23S rRNA + S-adenosyl-L-methionine = 5-methylcytidine(1962) in 23S rRNA + S-adenosyl-L-homocysteine + H(+). Functionally, specifically methylates the cytosine at position 1962 (m5C1962) of 23S rRNA. The protein is Ribosomal RNA large subunit methyltransferase I of Aliivibrio fischeri (strain ATCC 700601 / ES114) (Vibrio fischeri).